The chain runs to 1254 residues: MKKHRRALALVSCLFLCSLVWLPSWRVCCKESSSASASSYYSQDDNCALENEDVQFQKKDEREGPINAESLGKSGSNLPISPKEHKLKDDSIVDVQNTESKKLSPPVVETLPTVDLHEESSNAVVDSETVENISSSSTSEITPISKLDEIEKSGTIPIAKPSETEQSETDCDVGEALDASAPIEQPSFVSPPDSLVGQHIENVSSSHGKGKITKSEFESKVSASEQGGGDPKSALNASDNLKNESSDYTKPGDIDPTSVASPKDPEDIPTFDEWKKKVMEVEKEKSQSMHASSNGGSHATKKVQKNRNNYASVECGAKILAANPEAKSTSAILIENMDLYMLNPCSTKIWFVIELCEPIQVKQLDIANYELFSSTPKDFLVSISDRYPTNKWIKLGTFHGRDERNVQSFPLDEQMYAKYVKMFIKYIKVELLSHFGSEHFCPLSLIRVFGTSMVEEYEEIADSQYHSERQELFDEDYDYPLDYNTGEDKSSKNLLGSATNAILNMVNIAANILGAKTEDLTEGNKSISENATATAAPKMPESTPVSTPVPSPEYVTTEVHTHDMEPSTPDTPKESPIVQLVQEEEEEASPSTVTLLGSGEQEDESSPWFESETQIFCSELTTICCISSFSEYIYKWCSVRVALYRQRSRTALSKGKDYLVLAQPPLLLPAESVDVSVLQPLSGELENTNIEREAETVVLGDLSSSMHQDDLVNHTVDAVELEPSHSQTLSQSLLLDITPEINPLPKIEVSESVEYEAGHIPSPVIPQESSVEIDNETEQKSESFSSIEKPSITYETNKVNELMDNIIKEDVNSMQIFTKLSETIVPPINTATVPDNEDGEAKMNIADTAKQTLISVVDSSSLPEVKEEEQSPEDALLRGLQRTATDFYAELQNSTDLGYANGNLVHGSNQKESVFMRLNNRIKALEVNMSLSGRYLEELSQRYRKQMEEMQKAFNKTIVKLQNTSRIAEEQDQRQTEAIQLLQAQLTNMTQLVSNLSATVAELKREVSDRQSYLVISLVLCVVLGLMLCMQRCRNTSQFDGDYISKLPKSNQYPSPKRCFSSYDDMNLKRRTSFPLMRSKSLQLTGKEVDPNDLYIVEPLKFSPEKKKKRCKYKIEKIETIKPEEPLHPIANGDIKGRKPFTNQRDFSNMGEVYHSSYKGPPSEGSSETSSQSEESYFCGISACTSLCNGQSQKTKTEKRALKRRRSKVQDQGKLIKTLIQTKSGSLPSLHDIIKGNKEITVGTFGVTAVSGHI.

The first 29 residues, 1 to 29 (MKKHRRALALVSCLFLCSLVWLPSWRVCC), serve as a signal peptide directing secretion. Disordered stretches follow at residues 58–88 (KKDE…HKLK), 118–270 (EESS…DIPT), and 282–304 (EKEK…KKVQ). A compositionally biased stretch (low complexity) spans 130-145 (VENISSSSTSEITPIS). The segment covering 165–175 (EQSETDCDVGE) has biased composition (acidic residues). Residues N202 and N236 are each glycosylated (N-linked (GlcNAc...) asparagine). Residues 241–253 (LKNESSDYTKPGD) show a composition bias toward basic and acidic residues. The 170-residue stretch at 284–453 (EKSQSMHASS…SLIRVFGTSM (170 aa)) folds into the SUN domain. Over residues 288–297 (SMHASSNGGS) the composition is skewed to polar residues. N-linked (GlcNAc...) asparagine glycosylation occurs at N524. 3 disordered regions span residues 530–553 (NATA…PSPE), 583–605 (EEEE…EDES), and 759–788 (HIPS…SSIE). Residues 540-553 (PESTPVSTPVPSPE) are compositionally biased toward low complexity. A coiled-coil region spans residues 909 to 1009 (NQKESVFMRL…VAELKREVSD (101 aa)). N928 and N955 each carry an N-linked (GlcNAc...) asparagine glycan. The helical transmembrane segment at 1011 to 1031 (QSYLVISLVLCVVLGLMLCMQ) threads the bilayer. S1081 carries the phosphoserine modification. The interval 1152–1172 (EVYHSSYKGPPSEGSSETSSQ) is disordered. The segment covering 1163-1172 (SEGSSETSSQ) has biased composition (low complexity).

In terms of processing, O-glycosylated. O-mannosylated by POMT1 and POMT2 and elongated by POMGNT1. N-glycosylated. In terms of tissue distribution, highly expressed in pancreas and testis and to a lower extent in prostate, ovary, heart, thymus, small intestine and spleen.

It localises to the rough endoplasmic reticulum membrane. Required for bone modeling during late embryogenesis. Regulates type I collagen synthesis in osteoblasts during their postnatal maturation. This is SUN domain-containing ossification factor (SUCO) from Homo sapiens (Human).